The chain runs to 337 residues: Phytanoyl-CoA dioxygenase, peroxisomal (337 aa).

The transit peptide at 1-30 (MDRNRASARLTVLLRHLGCRSAGTIIAHHT) directs the protein to the peroxisome. Residues Lys-59 and Lys-108 each carry the N6-succinyllysine modification. 2-oxoglutarate is bound by residues Lys-120, Met-157, 175–177 (HQD), and Trp-193. 2 residues coordinate Fe cation: His-175 and Asp-177. Lys-252 is subject to N6-succinyllysine. His-264 serves as a coordination point for Fe cation. Ser-266 and Arg-275 together coordinate 2-oxoglutarate.

The protein belongs to the PhyH family. As to quaternary structure, interacts with FKBP52 and PHYHIP. The cofactor is Fe cation. L-ascorbate serves as cofactor. Requires ATP as cofactor. Mg(2+) is required as a cofactor.

The protein resides in the peroxisome. The enzyme catalyses phytanoyl-CoA + 2-oxoglutarate + O2 = 2-hydroxyphytanoyl-CoA + succinate + CO2. The catalysed reaction is 3-methylhexadecanoyl-CoA + 2-oxoglutarate + O2 = 2-hydroxy-3-methylhexadecanoyl-CoA + succinate + CO2. It carries out the reaction hexadecanoyl-CoA + 2-oxoglutarate + O2 = 2-hydroxyhexadecanoyl-CoA + succinate + CO2. It catalyses the reaction octanoyl-CoA + 2-oxoglutarate + O2 = 2-hydroxyoctanoyl-CoA + succinate + CO2. The enzyme catalyses decanoyl-CoA + 2-oxoglutarate + O2 = 2-hydroxydecanoyl-CoA + succinate + CO2. The catalysed reaction is 3-methylbutanoyl-CoA + 2-oxoglutarate + O2 = 2-hydroxy-3-methylbutanoyl-CoA + succinate + CO2. It carries out the reaction heptadecanoyl-CoA + 2-oxoglutarate + O2 = 2-hydroxyheptadecanoyl-CoA + succinate + CO2. It catalyses the reaction eicosanoyl-CoA + 2-oxoglutarate + O2 = 2-hydroxyeicosanoyl-CoA + succinate + CO2. The enzyme catalyses octadecanoyl-CoA + 2-oxoglutarate + O2 = 2-hydroxyoctadecanoyl-CoA + succinate + CO2. The catalysed reaction is dodecanoyl-CoA + 2-oxoglutarate + O2 = 2-hydroxydodecanoyl-CoA + succinate + CO2. It carries out the reaction tetradecanoyl-CoA + 2-oxoglutarate + O2 = 2-hydroxytetradecanoyl-CoA + succinate + CO2. It catalyses the reaction hexanoyl-CoA + 2-oxoglutarate + O2 = 2-hydroxyhexanoyl-CoA + succinate + CO2. The enzyme catalyses butanoyl-CoA + 2-oxoglutarate + O2 = 2-hydroxybutanoyl-CoA + succinate + CO2. The catalysed reaction is 3-methylnonanoyl-CoA + 2-oxoglutarate + O2 = 2-hydroxy-3-methylnonanoyl-CoA + succinate + CO2. It carries out the reaction 3-methylundecanoyl-CoA + 2-oxoglutarate + O2 = 2-hydroxy-3-methylundecanoyl-CoA + succinate + CO2. It catalyses the reaction 3-methyldodecanoyl-CoA + 2-oxoglutarate + O2 = 2-hydroxy-3-methyldodecanoyl-CoA + succinate + CO2. The protein operates within lipid metabolism; fatty acid metabolism. In terms of biological role, catalyzes the 2-hydroxylation of not only racemic phytanoyl-CoA and the isomers of 3-methylhexadecanoyl-CoA, but also a variety of other mono- branched 3-methylacyl-CoA esters (with a chain length of at least seven carbon atoms) and straight-chain acyl-CoA esters (with a chain length longer than four carbon atoms). Does not hydroxylate long and very long straight chain acyl-CoAs or 2-methyl-and 4-methyl-branched acyl-CoAs. This is Phytanoyl-CoA dioxygenase, peroxisomal (PHYH) from Bos taurus (Bovine).